Consider the following 88-residue polypeptide: MRLFISLPILIVVLAMALEGPAPAQATPDLASTFENLPDKLKEFGSALEDKTRAAIEHIKQKGILTKTRTWFSETFDKVKEKFKTTFA.

Positions 1–26 (MRLFISLPILIVVLAMALEGPAPAQA) are cleaved as a signal peptide.

The protein belongs to the apolipoprotein C1 family.

It is found in the secreted. In terms of biological role, inhibitor of lipoprotein binding to the low density lipoprotein (LDL) receptor, LDL receptor-related protein, and very low density lipoprotein (VLDL) receptor. Associates with high density lipoproteins (HDL) and the triacylglycerol-rich lipoproteins in the plasma and makes up about 10% of the protein of the VLDL and 2% of that of HDL. Appears to interfere directly with fatty acid uptake and is also the major plasma inhibitor of cholesteryl ester transfer protein (CETP). Modulates the interaction of APOE with beta-migrating VLDL and inhibits binding of beta-VLDL to the LDL receptor-related protein. Binds free fatty acids and reduces their intracellular esterification. The sequence is that of Apolipoprotein C-I (Apoc1) from Neotoma lepida (Desert woodrat).